We begin with the raw amino-acid sequence, 109 residues long: Nucleoid-associated protein ASA_2087 (109 aa).

2 disordered regions span residues 1 to 23 and 87 to 109; these read MFGKGGMGNLMKQAQQMQERMQK and QSKSKMGELTGGMQLPPGMKLPF. Positions 11-23 are enriched in low complexity; the sequence is MKQAQQMQERMQK.

The protein belongs to the YbaB/EbfC family. As to quaternary structure, homodimer.

Its subcellular location is the cytoplasm. The protein resides in the nucleoid. Functionally, binds to DNA and alters its conformation. May be involved in regulation of gene expression, nucleoid organization and DNA protection. The sequence is that of Nucleoid-associated protein ASA_2087 from Aeromonas salmonicida (strain A449).